A 393-amino-acid polypeptide reads, in one-letter code: Acetate kinase (393 aa).

A Mg(2+)-binding site is contributed by Asn7. An ATP-binding site is contributed by Lys14. Position 89 (Arg89) interacts with substrate. Asp146 functions as the Proton donor/acceptor in the catalytic mechanism. Residues 204-208 (HIGNG), 279-281 (DSR), and 327-331 (GIGEN) each bind ATP. Mg(2+) is bound at residue Glu379.

Belongs to the acetokinase family. In terms of assembly, homodimer. Mg(2+) serves as cofactor. The cofactor is Mn(2+).

It is found in the cytoplasm. It catalyses the reaction acetate + ATP = acetyl phosphate + ADP. It functions in the pathway metabolic intermediate biosynthesis; acetyl-CoA biosynthesis; acetyl-CoA from acetate: step 1/2. Functionally, catalyzes the formation of acetyl phosphate from acetate and ATP. Can also catalyze the reverse reaction. This Acholeplasma laidlawii (strain PG-8A) protein is Acetate kinase.